The primary structure comprises 334 residues: Thiamine-binding periplasmic protein (334 aa).

Positions 1-23 are cleaved as a signal peptide; it reads MRLLSLLTFSLFAVIGLAPAAQA. Residues 64–65, 166–167, W202, and 220–223 each bind thiamine; these read DG, AT, and YTTS.

This sequence belongs to the bacterial solute-binding protein 1 family. The complex is composed of two ATP-binding proteins (ThiQ), two transmembrane proteins (ThiP) and a solute-binding protein (ThiB).

The protein localises to the periplasm. Functionally, part of the ABC transporter complex ThiBPQ involved in thiamine import. The protein is Thiamine-binding periplasmic protein (thiB) of Brucella abortus biovar 1 (strain 9-941).